A 4022-amino-acid polypeptide reads, in one-letter code: MLESYVTPILMSYVNRYIKNLKPSDLQLSLWGGDVVLSKLELKLDVLEQELKLPFTFLSGHIHELRIHVPWTKLGSEPVVITINTMECILKLKDGIQDDHESCGSNSTNRSTAESTKSSIKPRRMQQAAPTDPDLPPGYVQSLIRRVVNNVNIVINNLILKYVEDDIVLSVNITSAECYTVGELWDRAFMDISATDLVLRKVINFSDCTVCLDKRNASGKIEFYQDPLLYKCSFRTRLHFTYENLNSKMPSVIKIHTLVESLKLSITDQQLPMFIRIMQLGIALYYGEIGNFKEGEIEDLTCHNKDMLGNITGSEDETRIDMQYPAQHKGQELYSQQDEEQPQGWVSWAWSFVPAIVSYDDGEEDFVGNDPASTMHQQKAQTLKDPIVSIGFYCTKATVTFKLTEMQVESSYYSPQKVKSKEVLCWEQEGTTVEALMMGEPFFDCQIGFVGCRAMCLKGIMGVKDFEENMNRSETEACFFICGDNLSTKGFTYLTNSLFDYRSPENNGTRAEFILDSTHHKETYTEIAGMQRFGAFYMDYLYTMENTSGKGSTNQQDFSSGKSEDLGTVQEKSTKSLVIGPLDFRLDSSAVHRILKMIVCALEHEYEPYSRLKSDIKDENETILNPEEVALLEEYIPTRHTSVTLLKCTCTISMAEFNLLDHLLPVIMGEKNSSNFMNTTNFQSLRPLPSIRILVDKINLEHSVPMYAEQLVHVVSSLTQPSDNLLHYCYVHCYLKIFGFQAGLTSLDCSGSYCLPVPVIPSFSTALYGKLLKLPTCWTKRSQIAITEGIFELPNLTIQATRAQTLLLQAIYQSWSHLGNVSSSAVIEALINEIFLSIGVKSKNPLPTLEGSIQNVELKYCSTSLVKCASGTMGSIKICAKAPVDSGKEKLIPLLQGPSDTKDLHSTKWLNESRKPESLLAPDLMAFTIQVPQYIDYCHNSGAVLLCSIQGLAVNIDPILYTWLIYQPQKRTSRHMQQQPVVAVPLVMPVCRRKEDEVSIGSAPLAKQQSYQASEYASSPVKTKTVTESRPLSVPVKAMLNISESCRSPEERMKEFIGIVWNAVKHLTLQLEVQSCCVFIPNDSLPSPSTIVSGDIPGTVRSWYHGQTSMPGTLVLCLPQIKIISAGHKYMEPLQEIPFVIPRPILEEGDAFPWTISLHNFSIYTLLGKQVTLCLVEPMGCTSTLAVTSQKLLATGPDTRHSFVVCLHVDLESLEIKCSNPQVQLFYELTDIMNKVWNKIQKRGNLNLSPTSPETMAGPVPTSPVRSSIGTAPPDTSTCSPSADIGTTTEGDSIQAGEESPFSDSVTLEQTTSNIGGTSGRVSLWMQWVLPKITIKLFAPDPENKGTEVCMVSELEDLSASIDVQDVYTKVKCKIESFNIDHYRSSLGEECWSLGQCGGVFLSCTDKLNRRTLLVRPISKQDPFSNCSGFFPSTTTKLLDGTHQQHGFLSLTYTKAVTKNVRHKLTSRNERRSFHKLSEGLMDGSPHFLHEILLSAQAFDIVLYFPLLNAIASIFQAKLPKTQKEKRKSPGQPMRTHTLTSRNLPLIYVNTSVIRIFIPKTEEMQPTVEANQAAKEDTVVLKIGSVAMAPQADNPLGRSVLRKDIYQRALNLGILRDPGSEIEDRQYQIDLQSINIGTAQWHQLKPEKESVSGGVVTETERNSQNPALEWNMASSIRRHQERRAILTPVLTDFSVRITGAPAVIFTKVVSPENLHTEEILVCGHSLEVNITTNLDFFLSVAQVQLLHQLIVANMTGLEPSNKAAEISKQEQKKVDIFDGGMAETSSRYSGAQDSGIGSDSVKIRIVQIEQHSGASQHRIARPSRQSSIVKNLNFIPFDIFITASRISLMTYSCMALSKSKSQEQKNNEKTDKSSLNLPEVDSDVAKPNQACISTVTAEDLLRSSISFPSGKKIGVLSLESLHASTRSSARQALGITIVRQPGRRGTGDLQLEPFLYFIVSQPSLLLSCHHRKQRVEVSIFDAVLKGVASDYKCIDPGKTLPEALDYCTVWLQTVPGEIDSKSGIPPSFITLQIKDFLNGPADVNLDISKPLKANLSFTKLDQINLFLKKIKNAHSLAHSEETSAMSNTMVNKDDLPVSKYYRGKLSKPKIHGDGVQKISAQENMWRAVSCFQKISVQTTQIVISMETVPHTSKPCLLASLSNLNGSLSVKATQKVPGIILGSSFLLSINDFLLKTSLKERSRILIGPCCATANLEAKWCKHSGNPGPEQSIPKISIDLRGGLLQVFWGQEHLNCLVLLHELLNGYLNEEGNFEVQVSEPVPQMSSPVEKNQTFKSEQSSDDLRTGLFQYVQDAESLKLPGVYEVLFYNETEDCPGMMLWRYPEPRVLTLVRITPVPFNTTEDPDISTADLGDVLQVPCSLEYWDELQKVFVAFREFNLSESKVCELQLPDINLVNDQKKLVSSDLWRIVLNSSQNGADDQSSASESGSQSTCDPLVTPTALAACTRVDSCFTPWFVPSLCVSFQFAHLEFHLCHHLDQLGTAAPQYLQPFVSDRNMPSELEYMIVSFREPHMYLRQWNNGSVCQEIQFLAQADCKLLECRNVTMQSVVKPFSIFGQMAVSSDVVEKLLDCTVIVDSVFVNLGQHVVHSLNTAIQAWQQNKCPEVEELVFSHFVICNDTQETLRFGQVDTDENILLASLHSHQYSWRSHKSPQLLHICIEGWGNWRWSEPFSVDHAGTFIRTIQYRGRTASLIIKVQQLNGVQKQIIICGRQIICSYLSQSIELKVVQHYIGQDGQAVVREHFDCLTAKQKLPSYILENNELTELCVKAKGDEDWSRDVCLESKAPEYSIVIQVPSSNSSIIYVWCTVLTLEPNSQVQQRMIVFSPLFIMRSHLPDPIIIHLEKRSLGLSETQIIPGKGQEKPLQNIEPDLVHHLTFQAREEYDPSDCAVPISTSLIKQIATKVHPGGTVNQILDEFYGPEKSLQPIWPYNKKDSDRNEQLSQWDSPMRVKLSIWKPYVRTLLIELLPWALLINESKWDLWLFEGEKIVLQVPAGKIIIPPNFQEAFQIGIYWANTNTVHKSVAIKLVHNLTSPKWKDGGNGEVVTLDEEAFVDTEIRLGAFPGHQKLCQFCISSMVQQGIQIIQIEDKTTIINNTPYQIFYKPQLSVCNPHSGKEYFRVPDSATFSICPGGEQPAMKSSSLPCWDLMPDISQSVLDASLLQKQIMLGFSPAPGADSSQCWSLPAIVRPEFPRQSVAVPLGNFRENGFCTRAIVLTYQEHLGVTYLTLSEDPSPRVIIHNRCPVKMLIKENIKDIPKFEVYCKKIPSECSIHHELYHQISSYPDCKTKDLLPSLLLRVEPLDEVTTEWSDAIDINSQGTQVVFLTGFGYVYVDVVHQCGTVFITVAPEGKAGPILTNTNRAPEKIVTFKMFITQLSLAVFDDLTHHKASAELLRLTLDNIFLCVAPGAGPLPGEEPVAALFELYCVEICCGDLQLDNQLYNKSNFHFAVLVCQGEKAEPIQCSKMQSLLISNKELEEYKEKCFIKLCITLNEGKSILCDINEFSFELKPARLYVEDTFVYYIKTLFDTYLPNSRLAGHSTHLSGGKQVLPMQVTQHARALVNPVKLRKLVIQPVNLLVSIHASLKLYIASDHTPLSFSVFERGPIFTTARQLVHALAMHYAAGALFRAGWVVGSLDILGSPASLVRSIGNGVADFFRLPYEGLTRGPGAFVSGVSRGTTSFVKHISKGTLTSITNLATSLARNMDRLSLDEEHYNRQEEWRRQLPESLGEGLRQGLSRLGISLLGAIAGIVDQPMQNFQKTSEAQASAGHKAKGVISGVGKGIMGVFTKPIGGAAELVSQTGYGILHGAGLSQLPKQRHQPSDLHADQAPNSHVKYVWKMLQSLGRPEVHMALDVVLVRGSGQEHEGCLLLTSEVLFVVSVSEDTQQQAFPVTEIDCAQDSKQNNLLTVQLKQPRVACDVEVDGVRERLSEQQYNRLVDYITKTSCHLAPSCSSMQIPCPVVAAEPPPSTVKTYHYLVDPHFAQVFLSKFTMVKNKALRKGFP.

The Chorein N-terminal domain occupies 2–102 (LESYVTPILM…KDGIQDDHES (101 aa)). Positions 100–134 (HESCGSNSTNRSTAESTKSSIKPRRMQQAAPTDPD) are disordered. Positions 103-119 (CGSNSTNRSTAESTKSS) are enriched in polar residues. Residues S414, S999, S1002, and S1033 each carry the phosphoserine modification. The tract at residues 1247 to 1314 (NLSPTSPETM…SVTLEQTTSN (68 aa)) is disordered. 2 stretches are compositionally biased toward polar residues: residues 1264–1292 (PVRS…TEGD) and 1302–1314 (FSDS…TTSN). Position 1815 is a phosphoserine (S1815). Basic and acidic residues predominate over residues 1860–1872 (KSQEQKNNEKTDK). The interval 1860-1880 (KSQEQKNNEKTDKSSLNLPEV) is disordered. In terms of domain architecture, SHR-BD spans 2631 to 2716 (HFVICNDTQE…RTASLIIKVQ (86 aa)). The tract at residues 3908–4022 (AFPVTEIDCA…KNKALRKGFP (115 aa)) is localizes the protein to the Golgi apparatus.

It belongs to the VPS13 family. As to quaternary structure, interacts with STX6. Interacts with STX12. Interacts with RAB6A isoform 1 (GTP-bound) and isoform 2 (GTP-bound). Interacts with RAB6B (GTP-bound). Widely expressed. There is apparent differential expression of different transcripts. In fetal brain, lung, liver, and kidney, two transcripts of 2 and 5 kb are identified. These transcripts are also seen in all adult tissues analyzed. A larger transcript (12-14 kb) is expressed in prostate, testis, ovary, and colon in the adult. Expression is very low in adult brain tissue. Expressed in peripheral blood lymphocytes. Isoform 1 and isoform 2 are expressed in brain and retina. Isoform 2 is expressed ubiquitously.

The protein localises to the recycling endosome membrane. The protein resides in the cytoplasmic vesicle. Its subcellular location is the secretory vesicle. It is found in the acrosome membrane. It localises to the golgi apparatus. The protein localises to the cis-Golgi network membrane. The protein resides in the endoplasmic reticulum-Golgi intermediate compartment membrane. Its subcellular location is the trans-Golgi network membrane. It is found in the early endosome membrane. It localises to the lysosome membrane. Its function is as follows. Mediates the transfer of lipids between membranes at organelle contact sites. Binds phosphatidylinositol 3-phosphate. Functions as a tethering factor in the slow endocytic recycling pathway, to assist traffic between early and recycling endosomes. Involved in the transport of proacrosomal vesicles to the nuclear dense lamina (NDL) during spermatid development. Plays a role in the assembly of the Golgi apparatus, possibly by mediating trafficking to the Golgi membrane. Plays a role in the development of the nervous system, and may be required for neuron projection development. May also play a role during adipose tissue development. Required for maintenance of the ocular lens. The polypeptide is Intermembrane lipid transfer protein VPS13B (VPS13B) (Homo sapiens (Human)).